Reading from the N-terminus, the 789-residue chain is DEAD-box ATP-dependent RNA helicase 28 (789 aa).

Residues 1 to 152 are disordered; the sequence is MPSSFFFEDA…AEYKPEDATP (152 aa). A coiled-coil region spans residues 13–66; that stretch reads DELELIRNQEDSSEEDVKEGEAEEHEAGEDEDGEEEYEEEDDDEEEEDEKRKRD. Acidic residues predominate over residues 23 to 60; it reads DSSEEDVKEGEAEEHEAGEDEDGEEEYEEEDDDEEEED. The segment covering 83–99 has biased composition (basic and acidic residues); that stretch reads GEEHARRHTTSIDEKIS. Positions 110-135 form a coiled coil; that stretch reads SINEEEEEEEEEEDASDAETDKQEEY. A compositionally biased stretch (acidic residues) spans 112–127; sequence NEEEEEEEEEEDASDA. Positions 167–195 match the Q motif motif; that stretch reads DTFMELNLSRPLLRACETLGYKKPTPIQA. One can recognise a Helicase ATP-binding domain in the interval 198 to 372; sequence IPLALTGRDL…KLSLNKPLRL (175 aa). 211 to 218 is an ATP binding site; it reads AITGSGKT. Residues 320–323 carry the DEAD box motif; it reads DEAD. Positions 402 to 546 constitute a Helicase C-terminal domain; it reads VLLSLCTRTF…SRVIPEQSIV (145 aa). Coiled-coil stretches lie at residues 563–591 and 628–677; these read ISAE…HRDE and SADR…EDEE. The tract at residues 611–789 is disordered; the sequence is AQAEKDSAGN…FKSKARYKRR (179 aa). A compositionally biased stretch (basic and acidic residues) spans 628–637; the sequence is SADRAEDLKM. A compositionally biased stretch (basic residues) spans 638 to 656; that stretch reads KEKRKREREKNLPRKKRRK. Over residues 665–678 the composition is skewed to acidic residues; sequence EDNEGEEEEEDEEG. Basic and acidic residues-rich tracts occupy residues 691 to 701, 718 to 734, and 743 to 761; these read KKQETDKKGLT, RAID…DKKQ, and PRGE…EKKQ. Residues 772-789 are compositionally biased toward basic residues; the sequence is PRTKSKNSFKSKARYKRR.

It belongs to the DEAD box helicase family. DDX27/DRS1 subfamily.

The enzyme catalyses ATP + H2O = ADP + phosphate + H(+). The sequence is that of DEAD-box ATP-dependent RNA helicase 28 (RH28) from Arabidopsis thaliana (Mouse-ear cress).